Reading from the N-terminus, the 303-residue chain is Phosphatidylglycerol--prolipoprotein diacylglyceryl transferase (303 aa).

3 helical membrane passes run Val-18–Leu-38, Leu-58–Glu-78, and Trp-107–Phe-127. An a 1,2-diacyl-sn-glycero-3-phospho-(1'-sn-glycerol)-binding site is contributed by Arg-154. 2 consecutive transmembrane segments (helical) span residues Pro-193–Ile-213 and Ile-266–Tyr-286.

The protein belongs to the Lgt family.

The protein resides in the cell inner membrane. The enzyme catalyses L-cysteinyl-[prolipoprotein] + a 1,2-diacyl-sn-glycero-3-phospho-(1'-sn-glycerol) = an S-1,2-diacyl-sn-glyceryl-L-cysteinyl-[prolipoprotein] + sn-glycerol 1-phosphate + H(+). Its pathway is protein modification; lipoprotein biosynthesis (diacylglyceryl transfer). In terms of biological role, catalyzes the transfer of the diacylglyceryl group from phosphatidylglycerol to the sulfhydryl group of the N-terminal cysteine of a prolipoprotein, the first step in the formation of mature lipoproteins. In Prochlorococcus marinus (strain MIT 9211), this protein is Phosphatidylglycerol--prolipoprotein diacylglyceryl transferase.